The following is a 446-amino-acid chain: Probable D-serine dehydratase (446 aa).

K116 carries the N6-(pyridoxal phosphate)lysine modification.

The protein belongs to the serine/threonine dehydratase family. DsdA subfamily. Pyridoxal 5'-phosphate serves as cofactor.

The catalysed reaction is D-serine = pyruvate + NH4(+). The protein is Probable D-serine dehydratase of Bacillus thuringiensis subsp. konkukian (strain 97-27).